Reading from the N-terminus, the 715-residue chain is Bromodomain-containing protein DDB_G0278469 (715 aa).

2 disordered regions span residues 18 to 46 (EDNN…NRNA) and 186 to 425 (QQQK…ETKQ). Composition is skewed to low complexity over residues 20–45 (NNNN…PNRN), 186–204 (QQQK…PTAQ), 215–227 (LTAA…TTTT), 234–254 (TAPP…TTKK), and 261–281 (SKSN…TTIT). The span at 307–316 (KPKEQKKDIM) shows a compositional bias: basic and acidic residues. A coiled-coil region spans residues 322–368 (SKKANTHEEKEEGESEEEEEEEEEEEEEEEEEEEEEQLEDKQKQTKT). Positions 332–359 (EEGESEEEEEEEEEEEEEEEEEEEEEQL) are enriched in acidic residues. Positions 366–389 (TKTPISQNKSASSNIKPLSKTSKS) are enriched in polar residues. Low complexity predominate over residues 405-414 (KKITSTTVTR). The stretch at 437–470 (KQQTQEEIEQELKLESIRKRIEQFINKFEKEIND) forms a coiled coil. The region spanning 474–599 (KDLDEGKRKI…IQFYKSLLET (126 aa)) is the Bromo domain. The disordered stretch occupies residues 653–715 (LVDEDEDECL…SEEEDQEATN (63 aa)). Residues 662–672 (LNNQNNPTTYD) are compositionally biased toward polar residues. Over residues 684 to 715 (QESDEESDEESDEESDEERDQLSEEEDQEATN) the composition is skewed to acidic residues.

The protein is Bromodomain-containing protein DDB_G0278469 of Dictyostelium discoideum (Social amoeba).